Reading from the N-terminus, the 555-residue chain is GPI-anchor transamidase component PIGS (555 aa).

Topologically, residues 2-18 are cytoplasmic; it reads ATAGAAATDLEVVRGKR. A cardiolipin is bound by residues Arg15 and Arg18. The chain crosses the membrane as a helical span at residues 19–39; it reads AALFFAAVAILLGLPLWWKTT. Topologically, residues 40–517 are lumenal; sequence ETYRAPLPYS…LHLLYFPDDQ (478 aa). N-linked (GlcNAc...) asparagine glycans are attached at residues Asn267 and Asn370. Residues 518 to 532 traverse the membrane as a helical segment; the sequence is KFAIYIPLFLPMAVP. Over 533 to 555 the chain is Cytoplasmic; that stretch reads ILLSLVKIFLETHKSWKKPEKID.

Belongs to the PIGS family. Heteropentamer. Part of the GPI-anchor transamidase complex, consisting of PIGK, PIGT, PIGS, PIGU and GAA1.

It localises to the endoplasmic reticulum membrane. The protein operates within glycolipid biosynthesis; glycosylphosphatidylinositol-anchor biosynthesis. Its function is as follows. Component of the glycosylphosphatidylinositol-anchor (GPI-anchor) transamidase (GPI-T) complex that catalyzes the formation of the linkage between a proprotein and a GPI-anchor and participates in GPI anchored protein biosynthesis. In Rattus norvegicus (Rat), this protein is GPI-anchor transamidase component PIGS.